The sequence spans 299 residues: Taste receptor type 2 member 5 (299 aa).

Position 1 (methionine 1) is a topological domain, extracellular. The helical transmembrane segment at 2-22 (LSAGLGLLMLVAVVEFLIGLI) threads the bilayer. Residues 23-45 (GNGVLVVWSFREWMRKFNWSSYN) are Cytoplasmic-facing. A helical membrane pass occupies residues 46–66 (LIILGLAGCRFLLQWLIILDL). Topologically, residues 67-82 (SLFPLFQSSRWLRYLS) are extracellular. A helical membrane pass occupies residues 83-103 (IFWVLVSQASLWFATFLSVFY). Residues 104-127 (CKKITTFDRPAYLWLKQRAYNLSL) lie on the Cytoplasmic side of the membrane. A helical membrane pass occupies residues 128–148 (WCLLGYFIINLLLTVQIGLMF). Residues 149–175 (YHPPQGNSSIRYPFESWQYLYAFRLNS) lie on the Extracellular side of the membrane. A glycan (N-linked (GlcNAc...) asparagine) is linked at asparagine 155. Residues 176–196 (GSYLPLMVFLVSSGMLIVSLY) form a helical membrane-spanning segment. At 197–223 (THHKKMKVHSAGRRDVRAKAHITALKS) the chain is on the cytoplasmic side. Residues 224–244 (LGCFLFLHLVYIMASPFSITS) traverse the membrane as a helical segment. At 245-253 (KTYPPDLTS) the chain is on the extracellular side. Residues 254 to 274 (VFIWETLMAAYPSLHSLILIM) traverse the membrane as a helical segment. The Cytoplasmic portion of the chain corresponds to 275–299 (GIPRVKQTCQKILWKTVCARRCWGP).

It belongs to the G-protein coupled receptor T2R family.

Its subcellular location is the membrane. Its function is as follows. Receptor that may play a role in the perception of bitterness and is gustducin-linked. May play a role in sensing the chemical composition of the gastrointestinal content. The activity of this receptor may stimulate alpha gustducin, mediate PLC-beta-2 activation and lead to the gating of TRPM5. The protein is Taste receptor type 2 member 5 (TAS2R5) of Gorilla gorilla gorilla (Western lowland gorilla).